The sequence spans 89 residues: Large ribosomal subunit protein uL23c (89 aa).

The protein belongs to the universal ribosomal protein uL23 family. In terms of assembly, part of the 50S ribosomal subunit.

The protein resides in the plastid. The protein localises to the chloroplast. Binds to 23S rRNA. This chain is Large ribosomal subunit protein uL23c (rpl23), found in Zygnema circumcarinatum (Green alga).